Reading from the N-terminus, the 507-residue chain is Alkyl hydroperoxide reductase subunit F (507 aa).

Aspartate 207–isoleucine 222 contributes to the FAD binding site. A disulfide bridge links cysteine 335 with cysteine 338. Residue aspartate 347–alanine 361 participates in NAD(+) binding. Residue threonine 467–aspartate 477 coordinates FAD.

The protein belongs to the class-II pyridine nucleotide-disulfide oxidoreductase family. Homodimer. It depends on FAD as a cofactor.

Functionally, serves to protect the cell against DNA damage by alkyl hydroperoxides. It can use either NADH or NADPH as electron donor for direct reduction of redox dyes or of alkyl hydroperoxides when combined with the AhpC protein. The sequence is that of Alkyl hydroperoxide reductase subunit F (ahpF) from Staphylococcus epidermidis (strain ATCC 35984 / DSM 28319 / BCRC 17069 / CCUG 31568 / BM 3577 / RP62A).